Reading from the N-terminus, the 207-residue chain is uncharacterized protein (207 aa).

This is an uncharacterized protein from Frog virus 3 (isolate Goorha) (FV-3).